Here is a 378-residue protein sequence, read N- to C-terminus: MSSTALLPPNTDQVLSRRLHGKAAEKKTGLAAIASKDVDEQSRKLQEYFEFWDRNHENESEEDRARRIDGYKSVVNSYYDLATDLYEYGWSQSFHFSRFYKGEAFAQSIARHEHYLAYRMGIKPGSRVLDVGCGVGGPAREITEFTGCNLVGLNNNDYQISRCNNYAVKRNLDKKQVFVKGDFMHMPFEDNTFDYVYAIEATVHAPSLEGVYGEIFRVLKPGGVFGVYEWVMSDDYDSSIPKHREIAYNIEVGDGIPQMVRKCDAVEAIKKVGFNLLEEDDLTDHDNPDLPWYYPLTGDITKCQNIWDVFTVFRTSRLGKLVTRYSVQFLEKIGVAAKGTSKVGDTLAIAQKGLIEGGETHLFTPMFLMIAKKPETDA.

It belongs to the class I-like SAM-binding methyltransferase superfamily. Erg6/SMT family.

Its subcellular location is the nucleus. The protein resides in the endoplasmic reticulum. It carries out the reaction zymosterol + S-adenosyl-L-methionine = fecosterol + S-adenosyl-L-homocysteine + H(+). The enzyme catalyses lanosterol + S-adenosyl-L-methionine = eburicol + S-adenosyl-L-homocysteine + H(+). It participates in steroid metabolism; ergosterol biosynthesis. Its function is as follows. Sterol 24-C-methyltransferase; part of the third module of ergosterol biosynthesis pathway that includes by the late steps of the pathway. Erg6 catalyzes the methyl transfer from S-adenosyl-methionine to the C-24 of zymosterol to form fecosterol. The third module or late pathway involves the ergosterol synthesis itself through consecutive reactions that mainly occur in the endoplasmic reticulum (ER) membrane. Firstly, the squalene synthase erg9 catalyzes the condensation of 2 farnesyl pyrophosphate moieties to form squalene, which is the precursor of all steroids. Secondly, squalene is converted into lanosterol by the consecutive action of the squalene epoxidase erg1 and the lanosterol synthase erg7. The lanosterol 14-alpha-demethylase erg11/cyp1 catalyzes C14-demethylation of lanosterol to produce 4,4'-dimethyl cholesta-8,14,24-triene-3-beta-ol. In the next steps, a complex process involving various demethylation, reduction and desaturation reactions catalyzed by the C-14 reductase erg24 and the C-4 demethylation complex erg25-erg26-erg27 leads to the production of zymosterol. Erg28 likely functions in the C-4 demethylation complex reaction by tethering erg26 and Erg27 to the endoplasmic reticulum or to facilitate interaction between these proteins. Then, the sterol 24-C-methyltransferase erg6 catalyzes the methyl transfer from S-adenosyl-methionine to the C-24 of zymosterol to form fecosterol. The C-8 sterol isomerase erg2 catalyzes the reaction which results in unsaturation at C-7 in the B ring of sterols and thus converts fecosterol to episterol. The sterol-C5-desaturases erg31 and erg32 then catalyze the introduction of a C-5 double bond in the B ring to produce 5-dehydroepisterol. The C-22 sterol desaturase erg5 further converts 5-dehydroepisterol into ergosta-5,7,22,24(28)-tetraen-3beta-ol by forming the C-22(23) double bond in the sterol side chain. Finally, ergosta-5,7,22,24(28)-tetraen-3beta-ol is substrate of the C-24(28) sterol reductase erg4 to produce ergosterol. In the genus Schizosaccharomyces, a second route exists between lanosterol and fecosterol, via the methylation of lanosterol to eburicol by erg6, followed by C14-demethylation by erg11/cyp1 and C4-demethylation by the demethylation complex erg25-erg26-erg27. The sequence is that of Sterol 24-C-methyltransferase erg6 from Schizosaccharomyces pombe (strain 972 / ATCC 24843) (Fission yeast).